A 310-amino-acid chain; its full sequence is D-alanine--D-alanine ligase (310 aa).

One can recognise an ATP-grasp domain in the interval 104-305 (KRLFHSEGLP…MPQLAERILQ (202 aa)). Residue 135-190 (LGDFHGAAFVKPLDSGSSVGISRAVGKDELIRGVAKALSVSHRCMVERAIEGRELT) participates in ATP binding. Mg(2+) is bound by residues Asp-259, Glu-272, and Asn-274.

This sequence belongs to the D-alanine--D-alanine ligase family. Requires Mg(2+) as cofactor. Mn(2+) serves as cofactor.

The protein resides in the cytoplasm. The enzyme catalyses 2 D-alanine + ATP = D-alanyl-D-alanine + ADP + phosphate + H(+). It functions in the pathway cell wall biogenesis; peptidoglycan biosynthesis. Functionally, cell wall formation. The chain is D-alanine--D-alanine ligase from Magnetococcus marinus (strain ATCC BAA-1437 / JCM 17883 / MC-1).